The chain runs to 491 residues: Glutamyl-tRNA(Gln) amidotransferase subunit A (491 aa).

Residues K76 and S154 each act as charge relay system in the active site. The active-site Acyl-ester intermediate is S178.

Belongs to the amidase family. GatA subfamily. Heterotrimer of A, B and C subunits.

It catalyses the reaction L-glutamyl-tRNA(Gln) + L-glutamine + ATP + H2O = L-glutaminyl-tRNA(Gln) + L-glutamate + ADP + phosphate + H(+). Allows the formation of correctly charged Gln-tRNA(Gln) through the transamidation of misacylated Glu-tRNA(Gln) in organisms which lack glutaminyl-tRNA synthetase. The reaction takes place in the presence of glutamine and ATP through an activated gamma-phospho-Glu-tRNA(Gln). The polypeptide is Glutamyl-tRNA(Gln) amidotransferase subunit A (Cereibacter sphaeroides (strain KD131 / KCTC 12085) (Rhodobacter sphaeroides)).